Reading from the N-terminus, the 247-residue chain is Triosephosphate isomerase (247 aa).

Substrate is bound at residue 8–10 (NWK). Histidine 94 functions as the Electrophile in the catalytic mechanism. Catalysis depends on glutamate 165, which acts as the Proton acceptor. Glycine 171 and serine 210 together coordinate substrate.

The protein belongs to the triosephosphate isomerase family. Homodimer.

It is found in the cytoplasm. The enzyme catalyses D-glyceraldehyde 3-phosphate = dihydroxyacetone phosphate. It participates in carbohydrate biosynthesis; gluconeogenesis. Its pathway is carbohydrate degradation; glycolysis; D-glyceraldehyde 3-phosphate from glycerone phosphate: step 1/1. In terms of biological role, involved in the gluconeogenesis. Catalyzes stereospecifically the conversion of dihydroxyacetone phosphate (DHAP) to D-glyceraldehyde-3-phosphate (G3P). This chain is Triosephosphate isomerase, found in Aquifex aeolicus (strain VF5).